Consider the following 340-residue polypeptide: Protein jhp_1168 (340 aa).

Seems to interact with H.pylori HolB.

Functionally, could be the functional equivalent of DNA polymerase III delta subunit (HolA). The chain is Protein jhp_1168 from Helicobacter pylori (strain J99 / ATCC 700824) (Campylobacter pylori J99).